A 166-amino-acid polypeptide reads, in one-letter code: NAD(P)H-quinone oxidoreductase subunit I, chloroplastic (166 aa).

2 consecutive 4Fe-4S ferredoxin-type domains span residues 55-84 and 95-124; these read GRIH…VDWK and LNYS…MTEE. C64, C67, C70, C74, C104, C107, C110, and C114 together coordinate [4Fe-4S] cluster.

This sequence belongs to the complex I 23 kDa subunit family. In terms of assembly, NDH is composed of at least 16 different subunits, 5 of which are encoded in the nucleus. Requires [4Fe-4S] cluster as cofactor.

It localises to the plastid. The protein localises to the chloroplast thylakoid membrane. It carries out the reaction a plastoquinone + NADH + (n+1) H(+)(in) = a plastoquinol + NAD(+) + n H(+)(out). The enzyme catalyses a plastoquinone + NADPH + (n+1) H(+)(in) = a plastoquinol + NADP(+) + n H(+)(out). NDH shuttles electrons from NAD(P)H:plastoquinone, via FMN and iron-sulfur (Fe-S) centers, to quinones in the photosynthetic chain and possibly in a chloroplast respiratory chain. The immediate electron acceptor for the enzyme in this species is believed to be plastoquinone. Couples the redox reaction to proton translocation, and thus conserves the redox energy in a proton gradient. This Guardiola tulocarpus protein is NAD(P)H-quinone oxidoreductase subunit I, chloroplastic.